The chain runs to 88 residues: Co-chaperonin GroES (88 aa).

The protein belongs to the GroES chaperonin family. In terms of assembly, heptamer of 7 subunits arranged in a ring. Interacts with the chaperonin GroEL.

It localises to the cytoplasm. Together with the chaperonin GroEL, plays an essential role in assisting protein folding. The GroEL-GroES system forms a nano-cage that allows encapsulation of the non-native substrate proteins and provides a physical environment optimized to promote and accelerate protein folding. GroES binds to the apical surface of the GroEL ring, thereby capping the opening of the GroEL channel. The sequence is that of Co-chaperonin GroES from Treponema denticola (strain ATCC 35405 / DSM 14222 / CIP 103919 / JCM 8153 / KCTC 15104).